A 921-amino-acid polypeptide reads, in one-letter code: Isoleucine--tRNA ligase (921 aa).

The 'HIGH' region motif lies at 57–67 (PYANGDIHMGH). E552 contributes to the L-isoleucyl-5'-AMP binding site. The 'KMSKS' region motif lies at 593–597 (KMSKS). K596 is a binding site for ATP. Zn(2+) is bound by residues C888, C891, C908, and C911.

It belongs to the class-I aminoacyl-tRNA synthetase family. IleS type 1 subfamily. As to quaternary structure, monomer. Zn(2+) serves as cofactor.

The protein resides in the cytoplasm. It catalyses the reaction tRNA(Ile) + L-isoleucine + ATP = L-isoleucyl-tRNA(Ile) + AMP + diphosphate. In terms of biological role, catalyzes the attachment of isoleucine to tRNA(Ile). As IleRS can inadvertently accommodate and process structurally similar amino acids such as valine, to avoid such errors it has two additional distinct tRNA(Ile)-dependent editing activities. One activity is designated as 'pretransfer' editing and involves the hydrolysis of activated Val-AMP. The other activity is designated 'posttransfer' editing and involves deacylation of mischarged Val-tRNA(Ile). This is Isoleucine--tRNA ligase from Bacillus cereus (strain G9842).